Here is a 396-residue protein sequence, read N- to C-terminus: Elongation factor Tu 1 (396 aa).

The tr-type G domain maps to 10–206 (KPHCNVGTIG…AVDDYIPQPE (197 aa)). The tract at residues 19 to 26 (GHVDHGKT) is G1. 19 to 26 (GHVDHGKT) contacts GTP. Position 26 (threonine 26) interacts with Mg(2+). Residues 60–64 (GITIS) form a G2 region. The tract at residues 81–84 (DCPG) is G3. Residues 81 to 85 (DCPGH) and 136 to 139 (NKCD) each bind GTP. The G4 stretch occupies residues 136 to 139 (NKCD). Residues 174 to 176 (SAL) form a G5 region.

This sequence belongs to the TRAFAC class translation factor GTPase superfamily. Classic translation factor GTPase family. EF-Tu/EF-1A subfamily. Monomer.

The protein resides in the cytoplasm. It catalyses the reaction GTP + H2O = GDP + phosphate + H(+). Its function is as follows. GTP hydrolase that promotes the GTP-dependent binding of aminoacyl-tRNA to the A-site of ribosomes during protein biosynthesis. This is Elongation factor Tu 1 from Rhodospirillum rubrum (strain ATCC 11170 / ATH 1.1.1 / DSM 467 / LMG 4362 / NCIMB 8255 / S1).